The chain runs to 904 residues: Auxilin-related protein 1 (904 aa).

3 disordered regions span residues 46–99, 150–731, and 749–776; these read AAGK…FDYD, SSIS…NLRK, and SASQ…RHQR. A compositionally biased stretch (basic and acidic residues) spans 59 to 69; the sequence is DPGRDGDDLLF. A compositionally biased stretch (low complexity) spans 81–95; sequence YGSSSGDSRSPSAPA. Residues 178–188 are compositionally biased toward basic and acidic residues; sequence KGADSDREEKG. Residues 201 to 215 show a composition bias toward low complexity; that stretch reads RTSSPPSKRTTSETT. A compositionally biased stretch (acidic residues) spans 232–244; the sequence is VEEDPFVVLEESE. Residues 245 to 271 are compositionally biased toward basic and acidic residues; that stretch reads STPREPSRTDPLDDIGKFNSRKTDHSS. The span at 370-383 shows a compositional bias: pro residues; the sequence is SAPPPTRPPPPRPT. Polar residues predominate over residues 394 to 419; that stretch reads SIPTSAYHSHVPSSGRASVNSPTASQ. A coiled-coil region spans residues 456–663; sequence SAAAMKDAMD…AAAEARGRAA (208 aa). Basic and acidic residues-rich tracts occupy residues 462 to 570 and 581 to 660; these read DAMD…EAHA and TDAR…EARG. Positions 619 to 640 constitute a R domain; the sequence is REKAEKAAAEAKERANAEAREK. The segment covering 661-673 has biased composition (low complexity); sequence RAAAQAKAKQQQE. The span at 674–697 shows a compositional bias: polar residues; the sequence is NTNDLDSFFSSISRPNSAPRQRTN. Positions 762 to 804 form a coiled coil; it reads ETEERRRARLERHQRTQERAAKALAEKNERDLQVQREQVEKDR. The segment covering 764–776 has biased composition (basic and acidic residues); the sequence is EERRRARLERHQR. The 66-residue stretch at 839-904 folds into the J domain; sequence CGWQPVSLTD…WNKFNSEELF (66 aa).

Interacts with SH3P1.

It is found in the cell membrane. Its subcellular location is the golgi apparatus. The protein resides in the trans-Golgi network. It localises to the endoplasmic reticulum. The protein localises to the cytoplasmic vesicle. Functionally, promotes uncoating of clathrin-coated vesicles. May interact directly with clathrin. The sequence is that of Auxilin-related protein 1 from Arabidopsis thaliana (Mouse-ear cress).